We begin with the raw amino-acid sequence, 588 residues long: UvrABC system protein C (588 aa).

The GIY-YIG domain occupies 12–89; it reads SKPGCYLYLN…IKKYRPKYNV (78 aa). The 36-residue stretch at 194–229 folds into the UVR domain; it reads NEVKTLLTNQMHKAAENLQFEEAQRIKEQIISLDFT.

The protein belongs to the UvrC family. As to quaternary structure, interacts with UvrB in an incision complex.

The protein localises to the cytoplasm. The UvrABC repair system catalyzes the recognition and processing of DNA lesions. UvrC both incises the 5' and 3' sides of the lesion. The N-terminal half is responsible for the 3' incision and the C-terminal half is responsible for the 5' incision. This is UvrABC system protein C from Mesoplasma florum (strain ATCC 33453 / NBRC 100688 / NCTC 11704 / L1) (Acholeplasma florum).